The following is a 311-amino-acid chain: Transcription factor MafB (311 aa).

Disordered stretches follow at residues 35–78 (PLGR…PTEQ) and 150–199 (EDLA…EDRF). The segment covering 54–76 (SVSSTPISTPCSSVPSSPSFSPT) has biased composition (low complexity). The segment covering 157–167 (HPHHHHHHHHQ) has biased composition (basic residues). Residues 168–194 (ASPTPSTSSSSSQQLQTSHQQHPPSSS) show a composition bias toward low complexity. The segment at 226-251 (RLKQKRRTLKNRGYAQSCRYKRVQQK) is basic motif. The bZIP domain occupies 226 to 289 (RLKQKRRTLK…DAYKLKCEKL (64 aa)). A leucine-zipper region spans residues 254-275 (LENEKTQLIQQVEQLKQEVTRL).

This sequence belongs to the bZIP family. Maf subfamily. In terms of assembly, homodimer or heterodimer with other bHLH-Zip transcription factors. Binds DNA as a homodimer or heterodimer. Self-associates; the interaction requires the intact MAFB leucine-zipper domain. Interacts with FOS, HOXD12 and PRRX1. Expressed in brain, thymus, gut, lung, mesenterium, spleen, kidney, ovary and bursa.

It is found in the nucleus. Its function is as follows. Acts as a transcriptional activator or repressor. Positively regulates the expression of alpha-A crystallin genes during lens fiber cell differentiation. Binds to Maf recognition elements (MARE). This Gallus gallus (Chicken) protein is Transcription factor MafB (MAFB).